Here is a 585-residue protein sequence, read N- to C-terminus: Zinc finger protein 732 (585 aa).

The KRAB domain maps to 4-75 (LTFRDVAIEF…KIHETVAKHP (72 aa)). A C2H2-type 1; degenerate zinc finger spans residues 141 to 163 (FQCNVHVKVFSTFSNSNQRRIRH). The C2H2-type 2; degenerate zinc finger occupies 167–189 (KHFKECGKSFQKFSDLTQHQGIH). Residues 195–217 (YTCEECGKDFKWYLIFNEYEIIH) form a C2H2-type 3; degenerate zinc finger. The C2H2-type 4 zinc-finger motif lies at 223–244 (FTCEECGNIFTTSSNFAKHKVH). Residues 250–272 (YKYEECGKAFNRSSTLTKHKRIH) form a C2H2-type 5; degenerate zinc finger. 9 consecutive C2H2-type zinc fingers follow at residues 278-300 (FTCE…KKIH), 306-328 (YKCQ…NRIH), 334-356 (YTCE…KRIH), 362-384 (YKCE…KSIH), 390-412 (YTCE…KRIH), 418-440 (HKCE…KIIH), 446-468 (YKCE…KKIH), 474-496 (YRCE…KTIH), and 502-524 (YECE…KKIH). The C2H2-type 15; degenerate zinc finger occupies 530–552 (YRCEECGKAFRRSRVLNKYKTIH). The C2H2-type 16; degenerate zinc finger occupies 558–580 (PKCKGCGKAFKWSSYLNQHNKIY).

Belongs to the krueppel C2H2-type zinc-finger protein family.

It is found in the nucleus. Its function is as follows. May be involved in transcriptional regulation. This Homo sapiens (Human) protein is Zinc finger protein 732 (ZNF732).